The chain runs to 76 residues: UPF0235 protein MMAR_2910 (76 aa).

It belongs to the UPF0235 family.

This is UPF0235 protein MMAR_2910 from Mycobacterium marinum (strain ATCC BAA-535 / M).